Reading from the N-terminus, the 496-residue chain is Angiopoietin-2 (496 aa).

The first 18 residues, 1 to 18 (MWQLVFFALSCDLVLAAA), serve as a signal peptide directing secretion. Residues N89, N119, N133, N151, N240, and N304 are each glycosylated (N-linked (GlcNAc...) asparagine). A coiled-coil region spans residues 130-255 (NLLNQTAEQT…KQQHDLMETV (126 aa)). The 221-residue stretch at 275–495 (KEEQIIFRDC…ATTMMIRPAD (221 aa)) folds into the Fibrinogen C-terminal domain. C284 and C313 are disulfide-bonded. Residues D429, D431, C433, and C435 each coordinate Ca(2+). 2 cysteine pairs are disulfide-bonded: C433–C435 and C437–C450.

Interacts with TEK/TIE2, competing for the same binding site as ANGPT1. Interacts with ITGA5. Interacts with SVEP1/polydom. Interacts with THBD; this interaction significantly inhibits the generation of activated PC and TAFIa/CPB2 by the thrombin/thrombomodulin complex.

Its subcellular location is the secreted. Its function is as follows. Binds to TEK/TIE2, competing for the ANGPT1 binding site, and modulating ANGPT1 signaling. Can induce tyrosine phosphorylation of TEK/TIE2 in the absence of ANGPT1. In the absence of angiogenic inducers, such as VEGF, ANGPT2-mediated loosening of cell-matrix contacts may induce endothelial cell apoptosis with consequent vascular regression. In concert with VEGF, it may facilitate endothelial cell migration and proliferation, thus serving as a permissive angiogenic signal. Involved in the regulation of lymphangiogenesis. This chain is Angiopoietin-2 (ANGPT2), found in Sus scrofa (Pig).